The following is a 224-amino-acid chain: Thymidylate kinase (224 aa).

13 to 20 (GGEGAGKS) is a binding site for ATP.

The protein belongs to the thymidylate kinase family.

It carries out the reaction dTMP + ATP = dTDP + ADP. Phosphorylation of dTMP to form dTDP in both de novo and salvage pathways of dTTP synthesis. The sequence is that of Thymidylate kinase from Agrobacterium fabrum (strain C58 / ATCC 33970) (Agrobacterium tumefaciens (strain C58)).